Reading from the N-terminus, the 172-residue chain is Translationally-controlled tumor protein homolog (172 aa).

One can recognise a TCTP domain in the interval 1 to 172 (MKIYKDIITG…FKHGLDEEKC (172 aa)).

The protein belongs to the TCTP family.

It localises to the cytoplasm. Functionally, involved in calcium binding and microtubule stabilization. This Drosophila yakuba (Fruit fly) protein is Translationally-controlled tumor protein homolog.